We begin with the raw amino-acid sequence, 480 residues long: Oxysterol-binding protein-related protein 2 (480 aa).

Positions 1–60 (MNGEEEFFDAVTGFDSDNSSGEFSEANQKVTGMIDLDTSKNNRIGKTGERPSQENGIQKH) are disordered. The span at 15 to 30 (DSDNSSGEFSEANQKV) shows a compositional bias: polar residues. Ser-19 and Ser-20 each carry phosphoserine. A 1,2-diacyl-sn-glycero-3-phospho-(1D-myo-inositol-4,5-bisphosphate) is bound by residues Lys-90, 178–179 (HH), and 427–431 (EEKQR).

It belongs to the OSBP family. In terms of assembly, monomer. Homotetramer; phosphatidylinositol-4,5-bisphosphate binding promotes formation of stable tetramers. Interacts with DIAPH1. As to expression, widely expressed.

The protein localises to the cytoplasm. It localises to the cytosol. Its subcellular location is the lipid droplet. The protein resides in the cell membrane. Functionally, intracellular transport protein that binds sterols and phospholipids and mediates lipid transport between intracellular compartments. Increases plasma membrane cholesterol levels and decreases phosphatidylinositol-4,5-bisphosphate levels in the cell membrane. Binds phosphoinositides, such as phosphatidylinositol-4,5-bisphosphate. Exhibits strong binding to phosphatidic acid and weak binding to phosphatidylinositol 3-phosphate. Binds cholesterol, dehydroergosterol, 22(R)-hydroxycholesterol and 25-hydroxycholesterol (in vitro). The chain is Oxysterol-binding protein-related protein 2 (OSBPL2) from Homo sapiens (Human).